Here is an 86-residue protein sequence, read N- to C-terminus: Large ribosomal subunit protein uL23 (86 aa).

This sequence belongs to the universal ribosomal protein uL23 family. Part of the 50S ribosomal subunit. Contacts protein L29.

In terms of biological role, binds to 23S rRNA. One of the proteins that surrounds the polypeptide exit tunnel on the outside of the ribosome. This chain is Large ribosomal subunit protein uL23, found in Pyrococcus furiosus (strain ATCC 43587 / DSM 3638 / JCM 8422 / Vc1).